An 88-amino-acid polypeptide reads, in one-letter code: Protein transport protein SBH2 (88 aa).

Positions 1 to 42 are disordered; sequence MAASVPPGGQRILQKRRQAQSIKEKQAKQTPTSTRQAGYGGS. Residues 1 to 61 are Cytoplasmic-facing; it reads MAASVPPGGQ…DEANGFRVDS (61 aa). The segment covering 28 to 42 has biased composition (polar residues); sequence KQTPTSTRQAGYGGS. Residues 62 to 82 traverse the membrane as a helical segment; it reads LVVLFLSVGFIFSVIALHLLT.

This sequence belongs to the SEC61-beta family. In terms of assembly, component of the heterotrimeric Ssh1 complex, which is composed of SSH1, SBH2 and SSS1.

Its subcellular location is the endoplasmic reticulum membrane. Its function is as follows. Part of the Ssh1 complex, which probably is the major component of a channel-forming translocon complex that may function exclusively in the cotranslational pathway of protein endoplasmic reticulum (ER) import. This Saccharomyces cerevisiae (strain ATCC 204508 / S288c) (Baker's yeast) protein is Protein transport protein SBH2 (SBH2).